Reading from the N-terminus, the 542-residue chain is CTP synthase (542 aa).

Positions 1-265 (MTRYIFITGG…DDEVLSVFGI (265 aa)) are amidoligase domain. CTP is bound at residue Ser-13. Ser-13 provides a ligand contact to UTP. ATP is bound by residues 14-19 (SLGKGL) and Asp-71. The Mg(2+) site is built by Asp-71 and Glu-139. Residues 146-148 (DIE), 186-191 (KTKPTQ), and Lys-222 each bind CTP. UTP-binding positions include 186-191 (KTKPTQ) and Lys-222. One can recognise a Glutamine amidotransferase type-1 domain in the interval 291–541 (TIAIVGKYTG…VEAAVEQSRL (251 aa)). Gly-353 serves as a coordination point for L-glutamine. Catalysis depends on Cys-380, which acts as the Nucleophile; for glutamine hydrolysis. L-glutamine-binding positions include 381–384 (FGMQ), Glu-404, and Arg-469. Active-site residues include His-514 and Glu-516.

The protein belongs to the CTP synthase family. As to quaternary structure, homotetramer.

It carries out the reaction UTP + L-glutamine + ATP + H2O = CTP + L-glutamate + ADP + phosphate + 2 H(+). It catalyses the reaction L-glutamine + H2O = L-glutamate + NH4(+). The catalysed reaction is UTP + NH4(+) + ATP = CTP + ADP + phosphate + 2 H(+). It functions in the pathway pyrimidine metabolism; CTP biosynthesis via de novo pathway; CTP from UDP: step 2/2. Allosterically activated by GTP, when glutamine is the substrate; GTP has no effect on the reaction when ammonia is the substrate. The allosteric effector GTP functions by stabilizing the protein conformation that binds the tetrahedral intermediate(s) formed during glutamine hydrolysis. Inhibited by the product CTP, via allosteric rather than competitive inhibition. Functionally, catalyzes the ATP-dependent amination of UTP to CTP with either L-glutamine or ammonia as the source of nitrogen. Regulates intracellular CTP levels through interactions with the four ribonucleotide triphosphates. The chain is CTP synthase from Parvibaculum lavamentivorans (strain DS-1 / DSM 13023 / NCIMB 13966).